A 299-amino-acid chain; its full sequence is MTDNTRLRIAMQKSGRLSDDSRELLARCGIKINLHTQRLIAMAENMPIDILRVRDDDIPGLVMDGVVDLGIIGENVLEEELLNRRAQGEDPRYFTLRRLDFGGCRLSLATPIDEAWDGPLSLNGKRIATSYPHLLKRYLDQKGISFKSCLLNGSVEVAPRAGLADAICDLVSTGATLEANGLREVEVIYRSKACLIQRDGEMEESKQQLIDKLLTRIQGVIQARESKYIMMHAPTERLDEVIALLPGAERPTILPLAGDQQRVAMHMVSSETLFWETMEKLKALGASSILVLPIEKMME.

This sequence belongs to the ATP phosphoribosyltransferase family. Long subfamily. In terms of assembly, equilibrium between an active dimeric form, an inactive hexameric form and higher aggregates. Interconversion between the various forms is largely reversible and is influenced by the natural substrates and inhibitors of the enzyme. Requires Mg(2+) as cofactor.

The protein resides in the cytoplasm. It carries out the reaction 1-(5-phospho-beta-D-ribosyl)-ATP + diphosphate = 5-phospho-alpha-D-ribose 1-diphosphate + ATP. It participates in amino-acid biosynthesis; L-histidine biosynthesis; L-histidine from 5-phospho-alpha-D-ribose 1-diphosphate: step 1/9. Its activity is regulated as follows. Feedback inhibited by histidine. Its function is as follows. Catalyzes the condensation of ATP and 5-phosphoribose 1-diphosphate to form N'-(5'-phosphoribosyl)-ATP (PR-ATP). Has a crucial role in the pathway because the rate of histidine biosynthesis seems to be controlled primarily by regulation of HisG enzymatic activity. In Shigella dysenteriae serotype 1 (strain Sd197), this protein is ATP phosphoribosyltransferase.